The following is a 201-amino-acid chain: Peptide deformylase (201 aa).

Residues 1 to 24 form a disordered region; that stretch reads MANHFSQLAKKSKTNGNSEKIAKE. Fe cation is bound by residues Cys-121 and His-163. The active site involves Glu-164. His-167 lines the Fe cation pocket.

This sequence belongs to the polypeptide deformylase family. Requires Fe(2+) as cofactor.

It carries out the reaction N-terminal N-formyl-L-methionyl-[peptide] + H2O = N-terminal L-methionyl-[peptide] + formate. Functionally, removes the formyl group from the N-terminal Met of newly synthesized proteins. Requires at least a dipeptide for an efficient rate of reaction. N-terminal L-methionine is a prerequisite for activity but the enzyme has broad specificity at other positions. The chain is Peptide deformylase from Prochlorococcus marinus (strain MIT 9312).